The following is a 96-amino-acid chain: Integration host factor subunit beta (96 aa).

The protein belongs to the bacterial histone-like protein family. Heterodimer of an alpha and a beta chain.

Functionally, this protein is one of the two subunits of integration host factor, a specific DNA-binding protein that functions in genetic recombination as well as in transcriptional and translational control. The polypeptide is Integration host factor subunit beta (Methylocella silvestris (strain DSM 15510 / CIP 108128 / LMG 27833 / NCIMB 13906 / BL2)).